The chain runs to 141 residues: Hemoglobin subunit alpha-2 (141 aa).

The region spanning 1–141 (VLTDAERKEV…VATVLTSKYR (141 aa)) is the Globin domain. Residue H58 participates in O2 binding. H87 contributes to the heme b binding site.

This sequence belongs to the globin family. Heterotetramer of two alpha chains and two beta chains. In terms of tissue distribution, red blood cells.

Its function is as follows. Involved in oxygen transport from the lung to the various peripheral tissues. This is Hemoglobin subunit alpha-2 from Tachyglossus aculeatus aculeatus (Southeast Australian short-beaked echidna).